The following is a 145-amino-acid chain: Basic phospholipase A2 cL038 (145 aa).

A signal peptide spans 1–21 (MYPAHLLVLLAVCVSLLGASA). Residues 22–27 (IPPLPL) constitute a propeptide that is removed on maturation. 7 cysteine pairs are disulfide-bonded: C38–C98, C54–C144, C56–C72, C71–C125, C78–C118, C87–C111, and C105–C116. Y55, G57, and G59 together coordinate Ca(2+). The active site involves H75. D76 is a binding site for Ca(2+). D119 is an active-site residue.

It belongs to the phospholipase A2 family. Group I subfamily. D49 sub-subfamily. It depends on Ca(2+) as a cofactor. Expressed by the venom gland.

The protein localises to the secreted. It catalyses the reaction a 1,2-diacyl-sn-glycero-3-phosphocholine + H2O = a 1-acyl-sn-glycero-3-phosphocholine + a fatty acid + H(+). In terms of biological role, PLA2 catalyzes the calcium-dependent hydrolysis of the 2-acyl groups in 3-sn-phosphoglycerides. In Laticauda semifasciata (Black-banded sea krait), this protein is Basic phospholipase A2 cL038.